A 430-amino-acid polypeptide reads, in one-letter code: Replication protein A 32 kDa subunit C (430 aa).

The disordered stretch occupies residues 14 to 46; the sequence is MPSQRSGAPAPEYSAAGTGAAAAPSPSKPRDPR. Over residues 23–38 the composition is skewed to low complexity; sequence APEYSAAGTGAAAAPS. The OB DNA-binding region spans 86-160; it reads VRVLGRVVSV…QGLARSIRPI (75 aa).

The protein belongs to the replication factor A protein 2 family. As to quaternary structure, heterotrimer of RPA1, RPA2 and RPA3 (canonical replication protein A complex). Interacts with RPA1C and RPA3. Post-translationally, phosphorylated in a cell-cycle-dependent manner (from the S phase until mitosis). In response to DNA damage, recruited to DNA-repair nuclear foci, as a hypophosphorylated form.

The protein resides in the nucleus. In terms of biological role, component of the replication protein A complex (RPA) required for DNA recombination, repair and replication. The activity of RPA is mediated by single-stranded DNA binding and protein interactions. In Oryza sativa subsp. japonica (Rice), this protein is Replication protein A 32 kDa subunit C (RPA2C).